The primary structure comprises 334 residues: Fructose-1,6-bisphosphatase class 1 (334 aa).

Mg(2+) contacts are provided by Glu89, Asp112, Leu114, and Asp115. Substrate-binding positions include 115–118 (DGSS), Asn208, Tyr241, and Lys271. Glu277 serves as a coordination point for Mg(2+).

This sequence belongs to the FBPase class 1 family. As to quaternary structure, homotetramer. Requires Mg(2+) as cofactor.

The protein localises to the cytoplasm. It catalyses the reaction beta-D-fructose 1,6-bisphosphate + H2O = beta-D-fructose 6-phosphate + phosphate. It functions in the pathway carbohydrate biosynthesis; gluconeogenesis. This Photorhabdus laumondii subsp. laumondii (strain DSM 15139 / CIP 105565 / TT01) (Photorhabdus luminescens subsp. laumondii) protein is Fructose-1,6-bisphosphatase class 1.